Reading from the N-terminus, the 229-residue chain is Large ribosomal subunit protein uL1 (229 aa).

It belongs to the universal ribosomal protein uL1 family. Part of the 50S ribosomal subunit.

Binds directly to 23S rRNA. The L1 stalk is quite mobile in the ribosome, and is involved in E site tRNA release. Functionally, protein L1 is also a translational repressor protein, it controls the translation of the L11 operon by binding to its mRNA. This chain is Large ribosomal subunit protein uL1, found in Clostridium tetani (strain Massachusetts / E88).